The chain runs to 1124 residues: tRNA (34-2'-O)-methyltransferase regulator WDR6 (1124 aa).

The residue at position 1 (Met1) is an N-acetylmethionine. WD repeat units lie at residues 53–97 (MKRV…IVKI), 105–143 (RELW…LYDP), 147–189 (CSLQ…VWYP), 200–238 (VPDR…IWKV), 247–285 (RVQN…VWSH), 289–327 (ILQA…LWHL), 335–376 (SGVF…LYDL), 381–422 (WEQL…VVPI), 425–470 (PTAA…ISAA), 476–520 (IFVK…LYPS), 557–596 (PMST…FVRG), 602–640 (VLRQ…VWSP), 643–682 (HEKL…LYRA), 743–789 (LIDI…VWGV), 852–897 (RHRH…LFLL), 905–950 (QLLA…FWDL), 974–1015 (GSPC…VFVL), 1039–1076 (EEYS…FWRL), and 1082–1124 (TFMN…NWYD).

It belongs to the WD repeat WDR6 family. In terms of assembly, interacts with FTSJ1; the interaction is direct, and required for 2'-O-methylation of position 34 in substrate tRNAs. Interacts with IRS4. Interacts with STK11/LKB1.

The protein localises to the cytoplasm. Together with methyltransferase FTSJ1, methylates the 2'-O-ribose of nucleotides at position 34 of the tRNA anticodon loop of substrate tRNAs. Required for the correct positioning of the substrate tRNA for methylation. Required to suppress amino acid starvation-induced autophagy. Enhances the STK11/LKB1-induced cell growth suppression activity. The chain is tRNA (34-2'-O)-methyltransferase regulator WDR6 (WDR6) from Bos taurus (Bovine).